A 348-amino-acid chain; its full sequence is Alcohol dehydrogenase 2 (348 aa).

S2 bears the N-acetylserine mark. Residue C44 participates in Zn(2+) binding. NAD(+)-binding residues include H45, T46, and H49. Residues H67, E68, C98, C101, C104, C112, and C154 each coordinate Zn(2+). NAD(+)-binding residues include G181, G182, L183, D202, and K207. Phosphoserine is present on S213. Position 222 (F222) interacts with NAD(+). T223 bears the Phosphothreonine mark. Residues K226 and K234 each participate in a glycyl lysine isopeptide (Lys-Gly) (interchain with G-Cter in ubiquitin) cross-link. V269 contributes to the NAD(+) binding site. The residue at position 279 (S279) is a Phosphoserine. K287 participates in a covalent cross-link: Glycyl lysine isopeptide (Lys-Gly) (interchain with G-Cter in ubiquitin). 2 residues coordinate NAD(+): S294 and V296. S316 carries the post-translational modification Phosphoserine. A Glycyl lysine isopeptide (Lys-Gly) (interchain with G-Cter in ubiquitin) cross-link involves residue K319. Position 341 (R341) interacts with NAD(+).

The protein belongs to the zinc-containing alcohol dehydrogenase family. As to quaternary structure, homotetramer. Zn(2+) is required as a cofactor.

It localises to the cytoplasm. It catalyses the reaction a primary alcohol + NAD(+) = an aldehyde + NADH + H(+). The catalysed reaction is a secondary alcohol + NAD(+) = a ketone + NADH + H(+). It carries out the reaction ethanol + NAD(+) = acetaldehyde + NADH + H(+). The enzyme catalyses butan-1-ol + NAD(+) = butanal + NADH + H(+). It catalyses the reaction hexan-1-ol + NAD(+) = hexanal + NADH + H(+). In terms of biological role, preferentially oxidative, glucose-repressed isozyme that catalyzes the conversion of ethanol to acetaldehyde. Main enzyme involved in ethanol consumption. Acts on a variety of primary unbranched aliphatic alcohols. Also produces ethanol from glucose, albeit less than ADH1. The chain is Alcohol dehydrogenase 2 (ADH2) from Saccharomyces cerevisiae (strain ATCC 204508 / S288c) (Baker's yeast).